A 460-amino-acid chain; its full sequence is uncharacterized protein (460 aa).

A TRAM domain is found at Pro6 to Asp64. Residues Cys77, Cys83, Cys86, and Cys166 each coordinate [4Fe-4S] cluster. S-adenosyl-L-methionine contacts are provided by Gln290, Tyr319, Glu340, and Asp388. Cys415 (nucleophile) is an active-site residue.

The protein belongs to the class I-like SAM-binding methyltransferase superfamily. RNA M5U methyltransferase family.

This is an uncharacterized protein from Clostridium acetobutylicum (strain ATCC 824 / DSM 792 / JCM 1419 / IAM 19013 / LMG 5710 / NBRC 13948 / NRRL B-527 / VKM B-1787 / 2291 / W).